The chain runs to 159 residues: Small ribosomal subunit protein uS13 (159 aa).

The disordered stretch occupies residues 136–159 (QRTRSTGRSGATVGVTRKKTQAKK). The span at 138-149 (TRSTGRSGATVG) shows a compositional bias: low complexity.

This sequence belongs to the universal ribosomal protein uS13 family. As to quaternary structure, part of the 30S ribosomal subunit. Forms a loose heterodimer with protein S19. Forms two bridges to the 50S subunit in the 70S ribosome.

Located at the top of the head of the 30S subunit, it contacts several helices of the 16S rRNA. In the 70S ribosome it contacts the 23S rRNA (bridge B1a) and protein L5 of the 50S subunit (bridge B1b), connecting the 2 subunits; these bridges are implicated in subunit movement. The protein is Small ribosomal subunit protein uS13 of Methanothrix thermoacetophila (strain DSM 6194 / JCM 14653 / NBRC 101360 / PT) (Methanosaeta thermophila).